The sequence spans 340 residues: Cell division protein FtsQ (340 aa).

Positions 1-41 (MQGLNPFHRDQGAGGRPAPVRPAPARPAPVAPRTPRKDPAP) are disordered. Residues 1–55 (MQGLNPFHRDQGAGGRPAPVRPAPARPAPVAPRTPRKDPAPSRLAYRLNRMMLRP) are Cytoplasmic-facing. Residues 19–32 (PVRPAPARPAPVAP) are compositionally biased toward pro residues. A helical transmembrane segment spans residues 56-78 (LVRRLVHVGLPAFLAALVAGIWL). Topologically, residues 79 to 340 (SDDTRRANLT…NAAKAKKKSG (262 aa)) are periplasmic. A POTRA domain is found at 104–172 (FMVKMMTIEG…GVLSAVVTER (69 aa)). Residues 308 to 340 (RQARGQPELGPDGTPLAPEATAGNAAKAKKKSG) form a disordered region. Residues 324 to 333 (APEATAGNAA) are compositionally biased toward low complexity.

Belongs to the FtsQ/DivIB family. FtsQ subfamily.

The protein localises to the cell inner membrane. Its function is as follows. Essential cell division protein. The sequence is that of Cell division protein FtsQ from Paracoccus denitrificans (strain Pd 1222).